We begin with the raw amino-acid sequence, 446 residues long: Tubulin beta-2 chain (446 aa).

GTP contacts are provided by Gln11, Glu69, Ser138, Gly142, Thr143, Gly144, Asn204, and Asn226. Glu69 serves as a coordination point for Mg(2+). The interval 424–446 is disordered; that stretch reads QYQEATADEEGEFDEDEEGGGDE. The segment covering 429 to 446 has biased composition (acidic residues); that stretch reads TADEEGEFDEDEEGGGDE.

This sequence belongs to the tubulin family. In terms of assembly, dimer of alpha and beta chains. A typical microtubule is a hollow water-filled tube with an outer diameter of 25 nm and an inner diameter of 15 nM. Alpha-beta heterodimers associate head-to-tail to form protofilaments running lengthwise along the microtubule wall with the beta-tubulin subunit facing the microtubule plus end conferring a structural polarity. Microtubules usually have 13 protofilaments but different protofilament numbers can be found in some organisms and specialized cells. Mg(2+) is required as a cofactor. Testis specific.

The protein localises to the cytoplasm. Its subcellular location is the cytoskeleton. In terms of biological role, tubulin is the major constituent of microtubules, a cylinder consisting of laterally associated linear protofilaments composed of alpha- and beta-tubulin heterodimers. Microtubules grow by the addition of GTP-tubulin dimers to the microtubule end, where a stabilizing cap forms. Below the cap, tubulin dimers are in GDP-bound state, owing to GTPase activity of alpha-tubulin. The chain is Tubulin beta-2 chain (betaTub85D) from Drosophila melanogaster (Fruit fly).